Here is a 560-residue protein sequence, read N- to C-terminus: NAD-dependent malic enzyme (560 aa).

The active-site Proton donor is the Tyr-100. Arg-153 serves as a coordination point for NAD(+). Lys-171 acts as the Proton acceptor in catalysis. Residues Glu-242, Asp-243, and Asp-266 each contribute to the a divalent metal cation site. NAD(+)-binding residues include Asp-266 and Asn-413.

It belongs to the malic enzymes family. In terms of assembly, homotetramer. The cofactor is Mg(2+). Mn(2+) is required as a cofactor.

It catalyses the reaction (S)-malate + NAD(+) = pyruvate + CO2 + NADH. It carries out the reaction oxaloacetate + H(+) = pyruvate + CO2. In Psychrobacter cryohalolentis (strain ATCC BAA-1226 / DSM 17306 / VKM B-2378 / K5), this protein is NAD-dependent malic enzyme.